The following is a 347-amino-acid chain: Dihydroorotase (347 aa).

Positions 17 and 19 each coordinate Zn(2+). Residues 19 to 21 (HLR) and Asn-45 contribute to the substrate site. Zn(2+) contacts are provided by Lys-103, His-140, and His-178. Residue Lys-103 is modified to N6-carboxylysine. Position 140 (His-140) interacts with substrate. Residue Leu-223 participates in substrate binding. Position 251 (Asp-251) interacts with Zn(2+). Residue Asp-251 is part of the active site. His-255 and Ala-267 together coordinate substrate.

The protein belongs to the metallo-dependent hydrolases superfamily. DHOase family. Class II DHOase subfamily. In terms of assembly, homodimer. The cofactor is Zn(2+).

It catalyses the reaction (S)-dihydroorotate + H2O = N-carbamoyl-L-aspartate + H(+). It functions in the pathway pyrimidine metabolism; UMP biosynthesis via de novo pathway; (S)-dihydroorotate from bicarbonate: step 3/3. Functionally, catalyzes the reversible cyclization of carbamoyl aspartate to dihydroorotate. This chain is Dihydroorotase, found in Citrobacter koseri (strain ATCC BAA-895 / CDC 4225-83 / SGSC4696).